The following is a 157-amino-acid chain: UPF0225 protein PSPTO_4127 (157 aa).

Belongs to the UPF0225 family.

The protein is UPF0225 protein PSPTO_4127 of Pseudomonas syringae pv. tomato (strain ATCC BAA-871 / DC3000).